We begin with the raw amino-acid sequence, 72 residues long: MKPLSSAIAAALILFSAQGVAEQTTQPVVTSCANVVVVPPSQEHPPFDLNHMGTGSDKSDALGVPYYNQHAM.

The sequence is that of Multiple antibiotic resistance protein MarB (marB) from Escherichia coli (strain K12).